A 477-amino-acid polypeptide reads, in one-letter code: Bifunctional protein HldE (477 aa).

A ribokinase region spans residues 1 to 319 (MTVIFPNFSK…NIMNSHICTT (319 aa)). 195 to 198 (NISE) serves as a coordination point for ATP. Asp-264 is an active-site residue. The interval 346-477 (MTNGVFDILH…NIINAIKRKN (132 aa)) is cytidylyltransferase.

This sequence in the N-terminal section; belongs to the carbohydrate kinase PfkB family. The protein in the C-terminal section; belongs to the cytidylyltransferase family. As to quaternary structure, homodimer.

The catalysed reaction is D-glycero-beta-D-manno-heptose 7-phosphate + ATP = D-glycero-beta-D-manno-heptose 1,7-bisphosphate + ADP + H(+). It catalyses the reaction D-glycero-beta-D-manno-heptose 1-phosphate + ATP + H(+) = ADP-D-glycero-beta-D-manno-heptose + diphosphate. It participates in nucleotide-sugar biosynthesis; ADP-L-glycero-beta-D-manno-heptose biosynthesis; ADP-L-glycero-beta-D-manno-heptose from D-glycero-beta-D-manno-heptose 7-phosphate: step 1/4. It functions in the pathway nucleotide-sugar biosynthesis; ADP-L-glycero-beta-D-manno-heptose biosynthesis; ADP-L-glycero-beta-D-manno-heptose from D-glycero-beta-D-manno-heptose 7-phosphate: step 3/4. Catalyzes the phosphorylation of D-glycero-D-manno-heptose 7-phosphate at the C-1 position to selectively form D-glycero-beta-D-manno-heptose-1,7-bisphosphate. Functionally, catalyzes the ADP transfer from ATP to D-glycero-beta-D-manno-heptose 1-phosphate, yielding ADP-D-glycero-beta-D-manno-heptose. This Blochmanniella pennsylvanica (strain BPEN) protein is Bifunctional protein HldE.